Consider the following 305-residue polypeptide: Transmembrane protein 74 (305 aa).

Disordered regions lie at residues 52–88 (ATEM…LLHS) and 123–143 (RNRS…GWEN). The segment covering 58 to 78 (SKLSSSPASPSSSLQNSTLQP) has biased composition (low complexity). Transmembrane regions (helical) follow at residues 178-198 (FISA…SYIV) and 232-252 (VIAG…LLMM).

This sequence belongs to the TMEM74 family. In terms of tissue distribution, expressed in heart, lung, and placenta.

It localises to the lysosome membrane. Its subcellular location is the cytoplasmic vesicle. It is found in the autophagosome membrane. Plays an essential role in autophagy. TMEM74-induced autophagy may involve PI3K signal transduction. In Homo sapiens (Human), this protein is Transmembrane protein 74 (TMEM74).